A 633-amino-acid polypeptide reads, in one-letter code: uncharacterized protein (633 aa).

The interval 12–43 is disordered; it reads ESGTNNYSDTIANGNTLPPRSKKGHSGRRKRS. Residues 13–29 show a composition bias toward polar residues; sequence SGTNNYSDTIANGNTLP. Positions 31-42 are enriched in basic residues; that stretch reads RSKKGHSGRRKR. Transmembrane regions (helical) follow at residues 99–118 and 217–233; these read ILFG…SSAL and NCAF…ITAC. Residues 593-612 form a disordered region; that stretch reads DAETNKATGSAKSENIETKS.

The protein resides in the membrane. This is an uncharacterized protein from Saccharomyces cerevisiae (strain ATCC 204508 / S288c) (Baker's yeast).